The primary structure comprises 468 residues: F-box/LRR-repeat protein At4g14096 (468 aa).

One can recognise an F-box domain in the interval 7–60 (RDIISSLPEAISCHILSFLPTKEAASTSVLSKKWRYLFAFVPNLDLDESVYLNP). 6 LRR repeats span residues 114-136 (VSDL…MFLS), 138-167 (TLVR…YIDS), 169-194 (YFEK…VLDD), 216-241 (STQV…KFTD), 292-323 (TLYL…TIES), and 324-349 (NPEV…IFQG).

The sequence is that of F-box/LRR-repeat protein At4g14096 from Arabidopsis thaliana (Mouse-ear cress).